The sequence spans 128 residues: Aspartate 1-decarboxylase (128 aa).

Ser-25 (schiff-base intermediate with substrate; via pyruvic acid) is an active-site residue. Ser-25 bears the Pyruvic acid (Ser) mark. Thr-57 is a substrate binding site. Tyr-58 serves as the catalytic Proton donor. Residue Gly-73–Ala-75 participates in substrate binding.

This sequence belongs to the PanD family. In terms of assembly, heterooctamer of four alpha and four beta subunits. It depends on pyruvate as a cofactor. In terms of processing, is synthesized initially as an inactive proenzyme, which is activated by self-cleavage at a specific serine bond to produce a beta-subunit with a hydroxyl group at its C-terminus and an alpha-subunit with a pyruvoyl group at its N-terminus.

It localises to the cytoplasm. It carries out the reaction L-aspartate + H(+) = beta-alanine + CO2. It participates in cofactor biosynthesis; (R)-pantothenate biosynthesis; beta-alanine from L-aspartate: step 1/1. Its function is as follows. Catalyzes the pyruvoyl-dependent decarboxylation of aspartate to produce beta-alanine. The polypeptide is Aspartate 1-decarboxylase (Chlorobium phaeovibrioides (strain DSM 265 / 1930) (Prosthecochloris vibrioformis (strain DSM 265))).